The sequence spans 214 residues: MKLYQKFPETQVLTTQGVIDFYKDIFGKGKWLFLFAHPADFTPVCTTEFVEFSKAYNDFANLGVQLVGLSVDSVYSHIEWLKDIQEKYGIKVPFPVIADPDKKFARLLDIVDEASGQTIRGVFLVSPDGVIRFIAYYPLEAGRKISELLRITKAMIVNYKAKVVLPANWEPGQDVIVPPPNVFDEATMRMKMPKAKSWYLLFKDYNELPQDQKV.

Residues 1 to 157 (MKLYQKFPET…LLRITKAMIV (157 aa)) form the Thioredoxin domain. Cys-45 (cysteine sulfenic acid (-SOH) intermediate) is an active-site residue. Arg-120 contacts substrate.

Belongs to the peroxiredoxin family. Prx6 subfamily. Homodecamer. Pentamer of dimers that assemble into a ring structure.

Its subcellular location is the cytoplasm. It catalyses the reaction a hydroperoxide + [thioredoxin]-dithiol = an alcohol + [thioredoxin]-disulfide + H2O. In terms of biological role, thiol-specific peroxidase that catalyzes the reduction of hydrogen peroxide and organic hydroperoxides to water and alcohols, respectively. Plays a role in cell protection against oxidative stress by detoxifying peroxides. The protein is Peroxiredoxin 2 of Sulfuracidifex metallicus (Sulfolobus metallicus).